The chain runs to 407 residues: Putative D-cysteine desulfhydrase 2, mitochondrial (407 aa).

The transit peptide at 1-34 directs the protein to the mitochondrion; the sequence is MRPSPALAGGGRTVANLLSATEWMLPSPATQVHT. The disordered stretch occupies residues 39-72; the sequence is PSHSPPSPPHHFAFSNLTTAPKRNGGKGEEEGRP. Position 90 is an N6-(pyridoxal phosphate)lysine (lysine 90).

It belongs to the ACC deaminase/D-cysteine desulfhydrase family. Requires pyridoxal 5'-phosphate as cofactor.

The protein resides in the mitochondrion. The enzyme catalyses D-cysteine + H2O = hydrogen sulfide + pyruvate + NH4(+) + H(+). Functionally, catalyzes the production of hydrogen sulfide (H2S) from cysteine. The sequence is that of Putative D-cysteine desulfhydrase 2, mitochondrial from Oryza sativa subsp. japonica (Rice).